Consider the following 258-residue polypeptide: Ribosome maturation factor RimP (258 aa).

Disordered stretches follow at residues P48–A88 and I212–D258. Basic residues predominate over residues K215–G224.

This sequence belongs to the RimP family.

The protein localises to the cytoplasm. Required for maturation of 30S ribosomal subunits. In Desulfovibrio desulfuricans (strain ATCC 27774 / DSM 6949 / MB), this protein is Ribosome maturation factor RimP.